Here is a 372-residue protein sequence, read N- to C-terminus: Protein phosphatase Mn(2+)-dependent 1K (372 aa).

Residues 1–29 (MLSAAFITLLRSGGNQVKKRVLLSSILLQ) constitute a mitochondrion transit peptide. The tract at residues 46–61 (RCSRFDPDGSGQPATW) is critical for association with the BCKDH complex. One can recognise a PPM-type phosphatase domain in the interval 94–346 (NVGCASLIGK…DNSTAVVVPF (253 aa)). Residues aspartate 127 and glycine 128 each contribute to the Mn(2+) site. At serine 248 the chain carries Phosphoserine. Aspartate 298 and aspartate 337 together coordinate Mn(2+).

This sequence belongs to the PP2C family. As to quaternary structure, monomer. Interacts with E1 and E2 components of the branched-chain alpha-ketoacid dehydrogenase (BCKDH) complex; this interaction requires colocalization in mitochondria. Interacts with BCKDHA but not with BCKDHB of the E1 component. Interacts with the 24-meric E2 core composed of DBT monomers with a 24:1 stoichiometry; the N-terminal region (residues 49-61) of PPM1K and C-terminal linker of the lipoyl domain of DBT (residues 145-160) are critical for this interaction, whereas the lipoyl prosthetic group is dispensable. Competes with BCKDK for binding to the E2 core; this interaction is modulated by branched-chain alpha-keto acids. At steady state, BCKDH holoenzyme preferentially binds BCKDK and BCKDHA is phosphorylated. In response to high levels of branched-chain alpha-keto acids, the inhibitory BCKDK is replaced by activating PPM1K leading to BCKDHA dephosphorylation and BCAA degradation. Mn(2+) is required as a cofactor. In terms of tissue distribution, highly expressed in the heart, kidney, brain and liver and to a lesser extent in testis, lung, spleen and adipose tissue. Very low amount in muscle (at protein level). Also expressed in the thymus (at protein level) and the diaphragm. Significantly reduced in hypertrophied hearts.

It is found in the mitochondrion matrix. It catalyses the reaction O-phospho-L-seryl-[3-methyl-2-oxobutanoate dehydrogenase] + H2O = L-seryl-[3-methyl-2-oxobutanoate dehydrogenase] + phosphate. It carries out the reaction O-phospho-L-seryl-[protein] + H2O = L-seryl-[protein] + phosphate. The protein operates within protein modification. Its function is as follows. Serine/threonine-protein phosphatase component of macronutrients metabolism. Forms a functional kinase and phosphatase pair with BCKDK, serving as a metabolic regulatory node that coordinates branched-chain amino acids (BCAAs) with glucose and lipid metabolism via two distinct phosphoprotein targets: mitochondrial BCKDHA subunit of the branched-chain alpha-ketoacid dehydrogenase (BCKDH) complex and cytosolic ACLY, a lipogenic enzyme of Krebs cycle. At high levels of branched-chain ketoacids, dephosphorylates and activates mitochondrial BCKDH complex, a multisubunit complex consisting of three multimeric components each involved in different steps of BCAA catabolism: E1 composed of BCKDHA and BCKDHB, E2 core composed of DBT monomers, and E3 composed of DLD monomers. Tightly associates with the E2 component of BCKDH complex and dephosphorylates BCKDHA on Ser-334. Regulates the reversible phosphorylation of ACLY in response to changes in cellular carbohydrate abundance such as occurs during fasting to feeding metabolic transition. At fasting state, appears to dephosphorylate ACLY on Ser-455 and inactivate it. Refeeding stimulates MLXIPL/ChREBP transcription factor, leading to increased BCKDK to PPM1K expression ratio, phosphorylation and activation of ACLY that ultimately results in the generation of malonyl-CoA and oxaloacetate immediate substrates of de novo lipogenesis and gluconeogenesis, respectively. Recognizes phosphosites having SxS or RxxS motifs and strictly depends on Mn(2+) ions for the phosphatase activity. Regulates Ca(2+)-induced opening of mitochondrial transition pore and apoptotic cell death. The protein is Protein phosphatase Mn(2+)-dependent 1K of Mus musculus (Mouse).